Reading from the N-terminus, the 289-residue chain is Protein FraH (289 aa).

The segment at Cys4–Gly49 adopts a DZANK-type zinc-finger fold. A zinc finger lies at Cys18–Cys48. The region spanning Val204–Leu260 is the FHA domain.

Functionally, putative heterocyst to vegetative cell connection. The protein is Protein FraH (fraH) of Nostoc sp. (strain PCC 7120 / SAG 25.82 / UTEX 2576).